We begin with the raw amino-acid sequence, 438 residues long: Hydrogenobyrinate a,c-diamide synthase (438 aa).

Residues 247–438 enclose the GATase cobBQ-type domain; it reads RIALAEDAAF…TFFHAIAKGG (192 aa). The Nucleophile role is filled by Cys-329.

Belongs to the CobB/CbiA family. Requires Mg(2+) as cofactor.

The catalysed reaction is hydrogenobyrinate + 2 L-glutamine + 2 ATP + 2 H2O = hydrogenobyrinate a,c-diamide + 2 L-glutamate + 2 ADP + 2 phosphate + 2 H(+). The protein operates within cofactor biosynthesis; adenosylcobalamin biosynthesis; cob(II)yrinate a,c-diamide from precorrin-2 (aerobic route): step 9/10. Catalyzes the ATP-dependent amidation of the two carboxylate groups at positions a and c of hydrogenobyrinate, using either L-glutamine or ammonia as the nitrogen source. The protein is Hydrogenobyrinate a,c-diamide synthase of Agrobacterium fabrum (strain C58 / ATCC 33970) (Agrobacterium tumefaciens (strain C58)).